Here is a 419-residue protein sequence, read N- to C-terminus: UDP-N-acetylglucosamine 1-carboxyvinyltransferase (419 aa).

Position 22-23 (22-23 (KN)) interacts with phosphoenolpyruvate. Residue Arg92 coordinates UDP-N-acetyl-alpha-D-glucosamine. Cys116 functions as the Proton donor in the catalytic mechanism. Cys116 carries the post-translational modification 2-(S-cysteinyl)pyruvic acid O-phosphothioketal. Residues 121–125 (RPIDL), Asp307, and Leu329 each bind UDP-N-acetyl-alpha-D-glucosamine.

Belongs to the EPSP synthase family. MurA subfamily.

It localises to the cytoplasm. It catalyses the reaction phosphoenolpyruvate + UDP-N-acetyl-alpha-D-glucosamine = UDP-N-acetyl-3-O-(1-carboxyvinyl)-alpha-D-glucosamine + phosphate. It functions in the pathway cell wall biogenesis; peptidoglycan biosynthesis. Functionally, cell wall formation. Adds enolpyruvyl to UDP-N-acetylglucosamine. The chain is UDP-N-acetylglucosamine 1-carboxyvinyltransferase from Campylobacter fetus subsp. fetus (strain 82-40).